Here is a 539-residue protein sequence, read N- to C-terminus: GMP synthase [glutamine-hydrolyzing] (539 aa).

Positions 4 to 202 constitute a Glutamine amidotransferase type-1 domain; that stretch reads KILILDFGSQ…VLGICRAKAD (199 aa). Residue cysteine 81 is the Nucleophile of the active site. Active-site residues include histidine 176 and glutamate 178. Positions 203-395 constitute a GMPS ATP-PPase domain; sequence WVMKDHIEEA…LGLPPEMVYR (193 aa). 230 to 236 is a binding site for ATP; it reads SGGVDSS.

Homodimer.

The enzyme catalyses XMP + L-glutamine + ATP + H2O = GMP + L-glutamate + AMP + diphosphate + 2 H(+). It participates in purine metabolism; GMP biosynthesis; GMP from XMP (L-Gln route): step 1/1. Functionally, catalyzes the synthesis of GMP from XMP. The chain is GMP synthase [glutamine-hydrolyzing] from Cupriavidus pinatubonensis (strain JMP 134 / LMG 1197) (Cupriavidus necator (strain JMP 134)).